Here is a 193-residue protein sequence, read N- to C-terminus: uncharacterized protein (193 aa).

Helical transmembrane passes span 40–56, 63–79, 86–110, and 117–138; these read LYIA…LKLI, AAGL…SSLC, CSGY…IVSC, and FIFP…FQIY. The tract at residues 158 to 193 is disordered; the sequence is TTTKLSRSSSAPDLSCPSLSTQPTSPNQSLSAYKKY.

This sequence belongs to the chlamydial CPn_0442/CT_006/TC_0274 family.

The protein localises to the cell membrane. This is an uncharacterized protein from Chlamydia muridarum (strain MoPn / Nigg).